A 450-amino-acid polypeptide reads, in one-letter code: Probable ECA polymerase (450 aa).

A run of 11 helical transmembrane segments spans residues 6-26, 37-57, 63-83, 118-138, 155-175, 181-201, 207-227, 228-248, 341-361, 378-398, and 410-430; these read FSGLFVVWLLCTLFIATLTWF, VFFSLLFLLTFFFGFPLTSVL, VGVAPPEILLQALLSAGCFYA, VILMGIALVSVGIFFMHNGFL, GVALKRFFYFFIPAMLVVYFL, AWLFFLVSTVAFGLLTYMIVG, IIIAFAIFLFIGIIRGWISLW, MLAAAGVLGIVGMFWLALKRY, LVVMGGALFIPLGAIVVGLII, YKAAILHSFCFGAIFNMIVLA, and VFFIVVFGACLMIAKLLYWLF.

This sequence belongs to the WzyE family. In terms of assembly, probably part of a complex composed of WzxE, WzyE and WzzE.

Its subcellular location is the cell inner membrane. It functions in the pathway bacterial outer membrane biogenesis; enterobacterial common antigen biosynthesis. In terms of biological role, probably involved in the polymerization of enterobacterial common antigen (ECA) trisaccharide repeat units. This is Probable ECA polymerase from Shigella sonnei (strain Ss046).